Consider the following 343-residue polypeptide: Ribosomal RNA small subunit methyltransferase C (343 aa).

The protein belongs to the methyltransferase superfamily. RsmC family. As to quaternary structure, monomer.

The protein resides in the cytoplasm. It catalyses the reaction guanosine(1207) in 16S rRNA + S-adenosyl-L-methionine = N(2)-methylguanosine(1207) in 16S rRNA + S-adenosyl-L-homocysteine + H(+). Functionally, specifically methylates the guanine in position 1207 of 16S rRNA in the 30S particle. In Escherichia coli O81 (strain ED1a), this protein is Ribosomal RNA small subunit methyltransferase C.